A 1214-amino-acid chain; its full sequence is SWI/SNF complex subunit SMARCC2 (1214 aa).

A marR-like, BRCT and chromo domains module region spans residues 1-274; the sequence is MAVRKKDGGP…PVSRRKKISA (274 aa). The MarR-like domain maps to 10 to 136; sequence PNVKYYEAAD…IEKSLVQNNC (127 aa). Residues 140–183 form the BRCT; N-terminus domain; the sequence is PNIFLCPEIEPKLLGKLKDIIKRHQGTVTEDKNNASHVVYPVPG. Positions 189-217 constitute a Chromo domain; it reads EWVRPVMKRDKQVLLHWGYYPDSYDTWIP. The BRCT; C-terminus domain occupies 233-257; it reads KPRKVHAKWILDTDTFNEWMNEEDY. The disordered stretch occupies residues 257 to 413; that stretch reads YEVNDDKNPV…GEQTKNPDLH (157 aa). Positions 275-284 are enriched in polar residues; that stretch reads KTLTDEVNSP. 5 positions are modified to phosphoserine: Ser283, Ser286, Ser302, Ser304, and Ser306. Lys312 carries the N6-(ADP-ribosyl)lysine modification. N6-acetyllysine is present on Lys326. Residues 331–344 show a composition bias toward basic and acidic residues; that stretch reads HREEEQEDLTKDMD. Phosphoserine occurs at positions 347 and 387. The span at 379 to 398 shows a compositional bias: acidic residues; the sequence is DLDEQEDESMETTGKDEDEN. Residues 424–521 enclose the SWIRM domain; it reads IIIPSYAAWF…YQVDAESRPT (98 aa). Thr548 carries the post-translational modification Phosphothreonine. Glycyl lysine isopeptide (Lys-Gly) (interchain with G-Cter in SUMO2) cross-links involve residues Lys564, Lys566, Lys568, and Lys592. Positions 596 to 647 constitute an SANT domain; the sequence is SATREWTEQETLLLLEALEMYKDDWNKVSEHVGSRTQDECILHFLRLPIEDP. A Glycyl lysine isopeptide (Lys-Gly) (interchain with G-Cter in SUMO2) cross-link involves residue Lys704. The disordered stretch occupies residues 724-852; sequence KVTGKADPAF…GERKTKVERD (129 aa). 2 stretches are compositionally biased toward basic and acidic residues: residues 747–777 and 784–852; these read EPERIEESGNDEARVEGQATDEKKEPKEPRE and EEAK…VERD. Lys787 participates in a covalent cross-link: Glycyl lysine isopeptide (Lys-Gly) (interchain with G-Cter in SUMO2). Ser813 is subject to Phosphoserine. Residue Lys848 forms a Glycyl lysine isopeptide (Lys-Gly) (interchain with G-Cter in SUMO2) linkage. Residues 907 to 934 are a coiled coil; sequence EELETIMDREREALEYQRQQLLADRQAF. Disordered regions lie at residues 947 to 983, 997 to 1092, and 1182 to 1214; these read RQQHFQQMHQQQQQPPPALPPGSQPIPPTGAAGPPAV, PAGS…PPPP, and LPSASPLPDPGTPLPPDPTAPSPGTVTPVPPPQ. Residues 949 to 959 show a composition bias toward low complexity; sequence QHFQQMHQQQQ. The span at 960-974 shows a compositional bias: pro residues; it reads QPPPALPPGSQPIPP. Positions 997-1033 are enriched in low complexity; that stretch reads PAGSGAPPGSLGPSEQIGQAGSTAGPQQQQPAGAPQP. Pro residues-rich tracts occupy residues 1034-1051 and 1186-1202; these read GAVPPGVPPPGPHGPSPF and SPLPDPGTPLPPDPTAP.

Belongs to the SMARCC family. As to quaternary structure, component of the multiprotein chromatin-remodeling complexes SWI/SNF: SWI/SNF-A (BAF), SWI/SNF-B (PBAF) and related complexes. The canonical complex contains a catalytic subunit (either SMARCA4/BRG1/BAF190A or SMARCA2/BRM/BAF190B) and at least SMARCE1, ACTL6A/BAF53, SMARCC1/BAF155, SMARCC2/BAF170, and SMARCB1/SNF5/BAF47. Other subunits specific to each of the complexes may also be present permitting several possible combinations developmentally and tissue specific. Component of the BAF complex, which includes at least actin (ACTB), ARID1A/BAF250A, ARID1B/BAF250B, SMARCA2/BRM, SMARCA4/BRG1, ACTL6A/BAF53, ACTL6B/BAF53B, SMARCE1/BAF57, SMARCC1/BAF155, SMARCC2/BAF170, SMARCB1/SNF5/INI1, and one or more SMARCD1/BAF60A, SMARCD2/BAF60B, or SMARCD3/BAF60C. In muscle cells, the BAF complex also contains DPF3. Component of neural progenitors-specific chromatin remodeling complex (npBAF complex) composed of at least, ARID1A/BAF250A or ARID1B/BAF250B, SMARCD1/BAF60A, SMARCD3/BAF60C, SMARCA2/BRM/BAF190B, SMARCA4/BRG1/BAF190A, SMARCB1/BAF47, SMARCC1/BAF155, SMARCE1/BAF57, SMARCC2/BAF170, PHF10/BAF45A, ACTL6A/BAF53A and actin. Component of neuron-specific chromatin remodeling complex (nBAF complex) composed of at least, ARID1A/BAF250A or ARID1B/BAF250B, SMARCD1/BAF60A, SMARCD3/BAF60C, SMARCA2/BRM/BAF190B, SMARCA4/BRG1/BAF190A, SMARCB1/BAF47, SMARCC1/BAF155, SMARCE1/BAF57, SMARCC2/BAF170, DPF1/BAF45B, DPF3/BAF45C, ACTL6B/BAF53B and actin. Component of the SWI/SNF-B (PBAF) chromatin remodeling complex, at least composed of SMARCA4/BRG1, SMARCB1/BAF47/SNF5, ACTL6A/BAF53A or ACTL6B/BAF53B, SMARCE1/BAF57, SMARCD1/BAF60A, SMARCD2/BAF60B, perhaps SMARCD3/BAF60C, SMARCC1/BAF155, SMARCC2/BAF170, PBRM1/BAF180, ARID2/BAF200 and actin. May also interact with the SIN3A histone deacetylase transcription repressor complex in conjunction with SMARCA2 and SMARCA4. Interacts with SMARD1. Interacts with KDM6B. Interaction with RCOR1. Interacts with DPF2. Interacts with ERCC6. Interacts with FOS. Mono-ADP-ribosylation at Lys-312 by SIRT6 promotes recruitment to the enhancer region of the Heme oxygenase-1 (HO-1) locus, leading to transcription activation of the locus. As to expression, ubiquitously expressed.

It is found in the nucleus. Functionally, involved in transcriptional activation and repression of select genes by chromatin remodeling (alteration of DNA-nucleosome topology). Component of SWI/SNF chromatin remodeling complexes that carry out key enzymatic activities, changing chromatin structure by altering DNA-histone contacts within a nucleosome in an ATP-dependent manner. Can stimulate the ATPase activity of the catalytic subunit of these complexes. May be required for CoREST dependent repression of neuronal specific gene promoters in non-neuronal cells. Belongs to the neural progenitors-specific chromatin remodeling complex (npBAF complex) and the neuron-specific chromatin remodeling complex (nBAF complex). During neural development a switch from a stem/progenitor to a postmitotic chromatin remodeling mechanism occurs as neurons exit the cell cycle and become committed to their adult state. The transition from proliferating neural stem/progenitor cells to postmitotic neurons requires a switch in subunit composition of the npBAF and nBAF complexes. As neural progenitors exit mitosis and differentiate into neurons, npBAF complexes which contain ACTL6A/BAF53A and PHF10/BAF45A, are exchanged for homologous alternative ACTL6B/BAF53B and DPF1/BAF45B or DPF3/BAF45C subunits in neuron-specific complexes (nBAF). The npBAF complex is essential for the self-renewal/proliferative capacity of the multipotent neural stem cells. The nBAF complex along with CREST plays a role regulating the activity of genes essential for dendrite growth. Critical regulator of myeloid differentiation, controlling granulocytopoiesis and the expression of genes involved in neutrophil granule formation. This is SWI/SNF complex subunit SMARCC2 (SMARCC2) from Homo sapiens (Human).